The following is a 274-amino-acid chain: Insulin-like growth factor-binding protein-like 1 (274 aa).

The signal sequence occupies residues 1 to 21; that stretch reads MPRSPGLFLLLLVLQPLPALG. The IGFBP N-terminal domain maps to 30-105; that stretch reads RNPECGPCRP…PEGTGLCVCA (76 aa). Cystine bridges form between C34–C59, C37–C61, C42–C62, C48–C65, C73–C87, C81–C102, and C111–C147. The region spanning 91–149 is the Kazal-like domain; it reads AAGAAPEGTGLCVCAQRGSVCGSDGRSYPSVCALRLRARQAPRALPGHLHKARDGPCEF. Positions 151 to 255 constitute an Ig-like C2-type domain; sequence PVVITPPQSV…GEAQSHGTVT (105 aa). N162 is a glycosylation site (N-linked (GlcNAc...) asparagine). C172 and C239 form a disulfide bridge.

The protein resides in the secreted. Its function is as follows. IGF-binding proteins prolong the half-life of IGFs and have been shown to either inhibit or stimulate the growth promoting effects of the IGFs in cell culture. They alter the interaction of IGFs with their cell surface receptors. The chain is Insulin-like growth factor-binding protein-like 1 (IGFBPL1) from Bos taurus (Bovine).